We begin with the raw amino-acid sequence, 137 residues long: Large ribosomal subunit protein uL16 (137 aa).

This sequence belongs to the universal ribosomal protein uL16 family. As to quaternary structure, part of the 50S ribosomal subunit.

In terms of biological role, binds 23S rRNA and is also seen to make contacts with the A and possibly P site tRNAs. This is Large ribosomal subunit protein uL16 from Marinomonas sp. (strain MWYL1).